The sequence spans 501 residues: Symplectin (501 aa).

The region spanning 20 to 287 is the CN hydrolase domain; the sequence is PKTDMETREE…SKLLVAEILP (268 aa). Residue Glu60 is the Proton acceptor of the active site. Lys163 serves as the catalytic Proton donor. Catalysis depends on Cys196, which acts as the Nucleophile. The residue at position 390 (Cys390) is an S-(coelenterazin-3a-yl)cysteine.

This sequence belongs to the carbon-nitrogen hydrolase superfamily. BTD/VNN family. As to expression, photogenic gland (at protein level).

Functionally, monovalent ion-dependent bioluminescence photoprotein. Displays an emission peak at 470 nm (blue light). Trace amounts of monovalent ion trigger the intramolecular oxidation of the chromophore, didehydrocoelenterazine, with the emission of light. This Sthenoteuthis oualaniensis (Purpleback flying squid) protein is Symplectin.